The following is a 301-amino-acid chain: Mas-related G-protein coupled receptor member A6 (301 aa).

The Extracellular segment spans residues 1–15; sequence MHRSISIRILITNLM. Residues 16-36 form a helical membrane-spanning segment; sequence IVILGLVGLTGNAIVFWLLLF. Residues 37–42 lie on the Cytoplasmic side of the membrane; sequence RLRRNA. A helical transmembrane segment spans residues 43–63; sequence FSIYILNLALADFLFLLCHII. Over 64-77 the chain is Extracellular; the sequence is ASTEHILTFSSPNS. Residues 78–98 traverse the membrane as a helical segment; it reads IFINCLYTFRVLLYIAGLNML. The Cytoplasmic portion of the chain corresponds to 99–128; it reads SAISIERCLSVMCPIWYRCHRPEHTSTVMC. A helical membrane pass occupies residues 129–149; that stretch reads AMIWVLSLLLCILYRYFCGFL. At 150–163 the chain is on the extracellular side; sequence DTKYEDDYGCLAMN. A helical transmembrane segment spans residues 164–184; the sequence is FLTTAYLMFLFVVLCVSSLAL. The Cytoplasmic portion of the chain corresponds to 185-203; that stretch reads LARLFCGAGRMKLTRLYVT. A helical membrane pass occupies residues 204–224; it reads ITLTLLVFLLCGLPCGFYWFL. Over 225–240 the chain is Extracellular; sequence LSKIKNVFSVFEFSLY. Residues 241 to 261 form a helical membrane-spanning segment; sequence LTSVVLTAINSCANPIIYFFV. Over 262 to 301 the chain is Cytoplasmic; sequence GSFRHRLKHQTLKMVLQSALQDTPETPENMVEMSRNKAEL.

It belongs to the G-protein coupled receptor 1 family. Mas subfamily. As to expression, expressed in a subset of sensory neurons that includes nociceptors. Expressed in the subclass of non-peptidergic sensory neurons that are IB4(+) and VR1(-).

It is found in the cell membrane. In terms of biological role, orphan receptor. May be a receptor for RFamide-family neuropeptides such as NPFF and NPAF, which are analgesic in vivo. May regulate nociceptor function and/or development, including the sensation or modulation of pain. This chain is Mas-related G-protein coupled receptor member A6 (Mrgpra6), found in Mus musculus (Mouse).